We begin with the raw amino-acid sequence, 429 residues long: Ribosomal RNA small subunit methyltransferase B (429 aa).

S-adenosyl-L-methionine is bound by residues Cys-254–Lys-260, Asp-277, Asp-303, and Asp-322. Cys-375 serves as the catalytic Nucleophile.

It belongs to the class I-like SAM-binding methyltransferase superfamily. RsmB/NOP family.

Its subcellular location is the cytoplasm. It catalyses the reaction cytidine(967) in 16S rRNA + S-adenosyl-L-methionine = 5-methylcytidine(967) in 16S rRNA + S-adenosyl-L-homocysteine + H(+). Functionally, specifically methylates the cytosine at position 967 (m5C967) of 16S rRNA. The protein is Ribosomal RNA small subunit methyltransferase B of Escherichia coli (strain SE11).